We begin with the raw amino-acid sequence, 101 residues long: NADH-quinone oxidoreductase subunit K (101 aa).

3 consecutive transmembrane segments (helical) span residues 4 to 24, 30 to 50, and 61 to 81; these read LPHY…GIFV, IVIL…LVAF, and IFAM…LAIL.

The protein belongs to the complex I subunit 4L family. In terms of assembly, NDH-1 is composed of 14 different subunits. Subunits NuoA, H, J, K, L, M, N constitute the membrane sector of the complex.

Its subcellular location is the cell inner membrane. It catalyses the reaction a quinone + NADH + 5 H(+)(in) = a quinol + NAD(+) + 4 H(+)(out). In terms of biological role, NDH-1 shuttles electrons from NADH, via FMN and iron-sulfur (Fe-S) centers, to quinones in the respiratory chain. The immediate electron acceptor for the enzyme in this species is believed to be ubiquinone. Couples the redox reaction to proton translocation (for every two electrons transferred, four hydrogen ions are translocated across the cytoplasmic membrane), and thus conserves the redox energy in a proton gradient. The polypeptide is NADH-quinone oxidoreductase subunit K (Caulobacter vibrioides (strain ATCC 19089 / CIP 103742 / CB 15) (Caulobacter crescentus)).